A 458-amino-acid polypeptide reads, in one-letter code: UDP-N-acetylmuramate--L-alanine ligase (458 aa).

112-118 serves as a coordination point for ATP; that stretch reads GMHGKTT.

Belongs to the MurCDEF family.

Its subcellular location is the cytoplasm. It carries out the reaction UDP-N-acetyl-alpha-D-muramate + L-alanine + ATP = UDP-N-acetyl-alpha-D-muramoyl-L-alanine + ADP + phosphate + H(+). It participates in cell wall biogenesis; peptidoglycan biosynthesis. Cell wall formation. The polypeptide is UDP-N-acetylmuramate--L-alanine ligase (Acidobacterium capsulatum (strain ATCC 51196 / DSM 11244 / BCRC 80197 / JCM 7670 / NBRC 15755 / NCIMB 13165 / 161)).